Reading from the N-terminus, the 736-residue chain is Meiotic expression up-regulated protein 27 (736 aa).

Belongs to the UPF0300 family.

This chain is Meiotic expression up-regulated protein 27 (meu27), found in Schizosaccharomyces pombe (strain 972 / ATCC 24843) (Fission yeast).